The chain runs to 1174 residues: Male determiner protein Mdmd(V) (1174 aa).

Basic and acidic residues predominate over residues 1–15; the sequence is MNATDAESRKPENKP. Disordered regions lie at residues 1 to 51, 79 to 110, and 136 to 259; these read MNAT…SGQR, RKDG…PVEL, and KQLS…LRRS. Low complexity predominate over residues 16–35; that stretch reads SSESSSSGSTSGSSDGEVSS. Over residues 36–47 the composition is skewed to polar residues; sequence KTYFKNNKSKVL. Residues 79–92 are compositionally biased toward basic and acidic residues; that stretch reads RKDGSNEMLPKEDS. Over residues 93 to 102 the composition is skewed to polar residues; the sequence is INTNHNYTTD. Positions 138-153 are enriched in low complexity; sequence LSAYRSRSRSTRLSYS. Residues 167–180 are compositionally biased toward basic residues; the sequence is SRYKKSVLRSRRTS. The segment covering 183 to 200 has biased composition (basic and acidic residues); that stretch reads HGRDSSTTKRSVSRDKDN. Residues 201–223 are compositionally biased toward basic residues; it reads RLRRRIGSSRSHTRSHSRFRRSE. Residues 235-259 are compositionally biased toward basic and acidic residues; sequence RSQERRHERRRSMSSDYERIALRRS. One can recognise an MIF4G domain in the interval 348–531; the sequence is KKYIHGYINK…KVLFQVRRDG (184 aa). Residues 597-608 show a composition bias toward low complexity; it reads DSDGSFGSGSNS. Residues 597–616 form a disordered region; it reads DSDGSFGSGSNSETALSDCD. Residues 641–757 form the MI domain; that stretch reads ALRRTIYLTL…SWDVLDCIKL (117 aa). The span at 840 to 857 shows a compositional bias: low complexity; it reads SAPSSSSSSSLSSELSAP. Disordered regions lie at residues 840–1045 and 1095–1133; these read SAPS…SRTK and RKDN…NHSR. Basic residues predominate over residues 869–909; sequence KKKHKGKNKKMTKKKNPSKKKEKTKKIVGKNKIAAKNKTIK. Positions 910–924 are enriched in basic and acidic residues; it reads RRTDKDNSSSKDNFL. Low complexity predominate over residues 926–957; the sequence is SESSSNESISLDSLSSELFAPSSYSSSESSND. The span at 963-1001 shows a compositional bias: basic residues; sequence KHKGKNKKMTKKKNPSNKREKTKKKLSKNKKAPNKNTKK. A compositionally biased stretch (low complexity) spans 1010–1020; it reads SSESSISESKS. Residues 1034–1045 show a composition bias toward basic residues; the sequence is RKKRVTSKSRTK. The segment covering 1095 to 1118 has biased composition (basic and acidic residues); it reads RKDNYGNRQNHEISQRHDSEIKRR. Residues 1119-1130 show a composition bias toward basic residues; that stretch reads REERKKRHHEKN.

Belongs to the CWC22 family. As to quaternary structure, component of the spliceosome C complex.

Its subcellular location is the nucleus speckle. Male determiner protein (M-factor) that controls male somatic sexual differentiation. Acts as a dominant factor that regulates the mRNA splicing of transformer (tra) and doublesex (dsx) transcripts and promotes expression of male splice forms of tra and dsx. Probably acts as a component of the spliceosome C complex required for mRNA splicing factor and exon-junction complex (EJC) assembly. Hinders eIF4AIII from non-specifically binding RNA and escorts it to the splicing machinery to promote EJC assembly on mature mRNAs. This chain is Male determiner protein Mdmd(V), found in Musca domestica (House fly).